The primary structure comprises 215 residues: LexA repressor (215 aa).

A DNA-binding region (H-T-H motif) is located at residues 29–49 (VREICSAVGFKSTSTVHSYLQ). Residues serine 138 and lysine 175 each act as for autocatalytic cleavage activity in the active site.

The protein belongs to the peptidase S24 family. In terms of assembly, homodimer.

It catalyses the reaction Hydrolysis of Ala-|-Gly bond in repressor LexA.. Represses a number of genes involved in the response to DNA damage (SOS response), including recA and lexA. In the presence of single-stranded DNA, RecA interacts with LexA causing an autocatalytic cleavage which disrupts the DNA-binding part of LexA, leading to derepression of the SOS regulon and eventually DNA repair. This is LexA repressor from Ruminiclostridium cellulolyticum (strain ATCC 35319 / DSM 5812 / JCM 6584 / H10) (Clostridium cellulolyticum).